Consider the following 205-residue polypeptide: Glycerol-3-phosphate acyltransferase (205 aa).

5 helical membrane passes run Ser6–Val26, Lys55–Val75, Val89–Val109, Ile120–Ala140, and Ala162–Ile182.

It belongs to the PlsY family. As to quaternary structure, probably interacts with PlsX.

It is found in the cell inner membrane. The catalysed reaction is an acyl phosphate + sn-glycerol 3-phosphate = a 1-acyl-sn-glycero-3-phosphate + phosphate. It participates in lipid metabolism; phospholipid metabolism. Its function is as follows. Catalyzes the transfer of an acyl group from acyl-phosphate (acyl-PO(4)) to glycerol-3-phosphate (G3P) to form lysophosphatidic acid (LPA). This enzyme utilizes acyl-phosphate as fatty acyl donor, but not acyl-CoA or acyl-ACP. The polypeptide is Glycerol-3-phosphate acyltransferase (Herminiimonas arsenicoxydans).